We begin with the raw amino-acid sequence, 300 residues long: Diaminopimelate epimerase (300 aa).

Substrate is bound by residues N15, Q47, and N67. Residue C76 is the Proton donor of the active site. Substrate is bound by residues 77–78 (GN), N163, N197, and 215–216 (ER). The Proton acceptor role is filled by C224. A substrate-binding site is contributed by 225–226 (GS). The disordered stretch occupies residues 275–300 (SGTFDPATGEWSRDAQNDKPTDRGAA). Residues 285–300 (WSRDAQNDKPTDRGAA) are compositionally biased toward basic and acidic residues.

This sequence belongs to the diaminopimelate epimerase family. In terms of assembly, homodimer.

It localises to the cytoplasm. It carries out the reaction (2S,6S)-2,6-diaminopimelate = meso-2,6-diaminopimelate. It participates in amino-acid biosynthesis; L-lysine biosynthesis via DAP pathway; DL-2,6-diaminopimelate from LL-2,6-diaminopimelate: step 1/1. Catalyzes the stereoinversion of LL-2,6-diaminopimelate (L,L-DAP) to meso-diaminopimelate (meso-DAP), a precursor of L-lysine and an essential component of the bacterial peptidoglycan. This chain is Diaminopimelate epimerase, found in Brucella anthropi (strain ATCC 49188 / DSM 6882 / CCUG 24695 / JCM 21032 / LMG 3331 / NBRC 15819 / NCTC 12168 / Alc 37) (Ochrobactrum anthropi).